A 194-amino-acid chain; its full sequence is 2,4-dinitrotoluene dioxygenase system, small oxygenase component (194 aa).

Belongs to the bacterial ring-hydroxylating dioxygenase beta subunit family. The 2,4-dinitrotoluene dioxygenase (DNTDO) multicomponent enzyme system is composed of an electron transfer component and a dioxygenase component (iron sulfur protein (ISP)). The electron transfer component is composed of a ferredoxin reductase (DntAa) and a ferredoxin (DntAb), and the dioxygenase component is formed of a large alpha subunit (DntAc) and a small beta subunit (DntAd).

Its function is as follows. Component of the 2,4-dinitrotoluene dioxygenase (DNTDO) multicomponent enzyme system which catalyzes the incorporation of both atoms of molecular oxygen into 2,4-dinitrotoluene (DNT) to form 4-methyl-5-nitrocatechol (MNC) and nitrite. The beta subunit seems to have a structural role in the holoenzyme. Also able to convert naphthalene to cis-(1R,2S)-dihydroxy-1,2-dihydronaphthalene. The sequence is that of 2,4-dinitrotoluene dioxygenase system, small oxygenase component from Burkholderia sp. (strain RASC).